The following is a 614-amino-acid chain: UvrABC system protein C (614 aa).

The region spanning 19–97 (SLPGCYLWKN…IKKYNPKFNV (79 aa)) is the GIY-YIG domain. The region spanning 208-243 (ERLVADLKKAMMDASSKMEYERAGFLKQRIEKINQL) is the UVR domain.

It belongs to the UvrC family. In terms of assembly, interacts with UvrB in an incision complex.

It localises to the cytoplasm. Its function is as follows. The UvrABC repair system catalyzes the recognition and processing of DNA lesions. UvrC both incises the 5' and 3' sides of the lesion. The N-terminal half is responsible for the 3' incision and the C-terminal half is responsible for the 5' incision. This Leptospira biflexa serovar Patoc (strain Patoc 1 / Ames) protein is UvrABC system protein C.